The sequence spans 563 residues: Putative cytochrome c oxidase subunit 1-beta (563 aa).

Transmembrane regions (helical) follow at residues 34–54 (IGHL…VMAL), 76–96 (LFTL…FAGF), 117–137 (MLSY…LAVP), 164–184 (MWIM…VNFL), 208–228 (LFTS…LLVL), 252–272 (LFWF…FGII), and 284–304 (IFGY…SVVV). Residue histidine 80 participates in Fe(II)-heme a binding. Residues histidine 258 and tyrosine 262 each coordinate Cu cation. The 1'-histidyl-3'-tyrosine (His-Tyr) cross-link spans 258-262 (HPEVY). Cu cation is bound by residues histidine 307 and histidine 308. Transmembrane regions (helical) follow at residues 309–329 (MFAT…LIAV) and 353–373 (MLWA…GVIL). Histidine 391 contributes to the heme a3 binding site. Helical transmembrane passes span 392–412 (FHYV…YFWW), 427–447 (IHFW…HWLG), and 470–490 (LSTI…YNVW). Histidine 393 serves as a coordination point for Fe(II)-heme a. Residues 536-563 (AFDLHHPAHAGEAPQPEPKHEQADREPS) form a disordered region. The span at 552–563 (EPKHEQADREPS) shows a compositional bias: basic and acidic residues.

It belongs to the heme-copper respiratory oxidase family. Associates with subunits II, III and IV to form cytochrome c oxidase. Requires Cu(2+) as cofactor. The cofactor is heme.

Its subcellular location is the cell membrane. It catalyses the reaction 4 Fe(II)-[cytochrome c] + O2 + 8 H(+)(in) = 4 Fe(III)-[cytochrome c] + 2 H2O + 4 H(+)(out). It participates in energy metabolism; oxidative phosphorylation. Cytochrome c oxidase is the component of the respiratory chain that catalyzes the reduction of oxygen to water. Subunits 1-3 form the functional core of the enzyme complex. CO I is the catalytic subunit of the enzyme. Electrons originating in cytochrome c are transferred via the copper A center of subunit 2 and heme A of subunit 1 to the bimetallic center formed by heme A3 and copper B. This Streptomyces avermitilis (strain ATCC 31267 / DSM 46492 / JCM 5070 / NBRC 14893 / NCIMB 12804 / NRRL 8165 / MA-4680) protein is Putative cytochrome c oxidase subunit 1-beta (ctaD2).